The primary structure comprises 489 residues: GTPase Der (489 aa).

EngA-type G domains follow at residues Pro3 to Met166 and Ile200 to Thr373. Residues Gly9–Ser16, Asp56–Ile60, Asn118–Asp121, Gly206–Ser213, Asp253–Val257, and Asn318–Asp321 contribute to the GTP site. The 85-residue stretch at Arg374–Gly458 folds into the KH-like domain.

This sequence belongs to the TRAFAC class TrmE-Era-EngA-EngB-Septin-like GTPase superfamily. EngA (Der) GTPase family. Associates with the 50S ribosomal subunit.

Its function is as follows. GTPase that plays an essential role in the late steps of ribosome biogenesis. The chain is GTPase Der from Shewanella loihica (strain ATCC BAA-1088 / PV-4).